A 286-amino-acid chain; its full sequence is Aquaporin PIP1-1 (286 aa).

Residue methionine 1 is modified to N-acetylmethionine. Residues 1 to 34 (MEGKEEDVRVGANKFPERQPIGTSAQSDKDYKEP) are disordered. Residues 1-54 (MEGKEEDVRVGANKFPERQPIGTSAQSDKDYKEPPPAPFFEPGELSSWSFWRAG) are Cytoplasmic-facing. Residues 55 to 75 (IAEFIATFLFLYITVLTVMGV) traverse the membrane as a helical segment. Residues 76–91 (KRSPNMCASVGIQGIA) are Extracellular-facing. The helical transmembrane segment at 92-112 (WAFGGMIFALVYCTAGISGGH) threads the bilayer. Residues 113–132 (INPAVTFGLFLARKLSLTRA) lie on the Cytoplasmic side of the membrane. The NPA 1 signature appears at 114 to 116 (NPA). The helical transmembrane segment at 133–153 (LYYIVMQCLGAICGAGVVKGF) threads the bilayer. Topologically, residues 154–174 (QPKQYQALGGGANTVAHGYTK) are extracellular. A helical transmembrane segment spans residues 175–195 (GSGLGAEIIGTFVLVYTVFSA). Over 196-208 (TDAKRNARDSHVP) the chain is Cytoplasmic. A helical membrane pass occupies residues 209–229 (ILAPLPIGFAVFLVHLATIPI). Residues 230–256 (TGTGINPARSLGAAIIYNKDHSWDDHW) lie on the Extracellular side of the membrane. An NPA 2 motif is present at residues 235-237 (NPA). The helical transmembrane segment at 257-277 (VFWVGPFIGAALAALYHVVVI) threads the bilayer. The Cytoplasmic segment spans residues 278–286 (RAIPFKSRS). Phosphoserine is present on serine 284.

This sequence belongs to the MIP/aquaporin (TC 1.A.8) family. PIP (TC 1.A.8.11) subfamily. Widely expressed. Expressed in roots, above ground and in flower buds.

The protein resides in the cell membrane. Its function is as follows. Water channel required to facilitate the transport of water across cell membrane. Its function is impaired by Hg(2+). The protein is Aquaporin PIP1-1 (PIP1-1) of Arabidopsis thaliana (Mouse-ear cress).